A 303-amino-acid polypeptide reads, in one-letter code: Phytochrome-associated serine/threonine-protein phosphatase (303 aa).

4 residues coordinate Zn(2+): Asp50, His52, Asp78, and Asn110. His111 serves as the catalytic Proton donor. The Zn(2+) site is built by His160 and His234.

This sequence belongs to the PPP phosphatase family. PP-6 (PP-V) subfamily. In terms of assembly, interacts with PHYA and PHYB, mostly when they are phosphorylated and in Pfr forms. Zn(2+) is required as a cofactor. Mostly expressed in flowers and stems.

It localises to the cytoplasm. The enzyme catalyses O-phospho-L-seryl-[protein] + H2O = L-seryl-[protein] + phosphate. It carries out the reaction O-phospho-L-threonyl-[protein] + H2O = L-threonyl-[protein] + phosphate. Catalytic subunit of protein phosphatase 6 (PP6). Dephosphorylates phosphorylated phytochromes, with a preference toward Pfr forms. Plays a major role in the photoperiodic control of flowering time in long days by modulating phytochrome signals in flowering time control. The sequence is that of Phytochrome-associated serine/threonine-protein phosphatase from Pisum sativum (Garden pea).